Consider the following 645-residue polypeptide: Protein FAM47B (645 aa).

3 stretches are compositionally biased toward basic and acidic residues: residues 1 to 11 (MGDRRPQDRPR), 238 to 251 (EPPETRASHLRVDP), and 288 to 299 (PETRVSHLHPEP). 2 disordered regions span residues 1-23 (MGDRRPQDRPRSQGMDSKPWYCD) and 168-321 (AREK…SLCP).

It belongs to the FAM47 family.

The sequence is that of Protein FAM47B (FAM47B) from Homo sapiens (Human).